A 283-amino-acid chain; its full sequence is Tropomyosin (283 aa).

Residues 1-283 are a coiled coil; the sequence is MDAIKKKMQA…LDSAFVELIL (283 aa).

Belongs to the tropomyosin family. As to quaternary structure, homodimer.

Its function is as follows. Tropomyosin, in association with the troponin complex, plays a central role in the calcium dependent regulation of muscle contraction. The polypeptide is Tropomyosin (Locusta migratoria (Migratory locust)).